The sequence spans 453 residues: Homogentisate 1,2-dioxygenase (453 aa).

The segment at 1–42 (MLEKAEKQRRAGSGQQRAAGYMPGFGNDFETESLPGALPQGQ) is disordered. H306 serves as the catalytic Proton acceptor. Fe cation contacts are provided by H349 and E355. Residues Y364 and H385 each contribute to the homogentisate site. Residue H385 participates in Fe cation binding.

Belongs to the homogentisate dioxygenase family. In terms of assembly, hexamer; dimer of trimers. The cofactor is Fe cation.

The enzyme catalyses homogentisate + O2 = 4-maleylacetoacetate + H(+). It functions in the pathway amino-acid degradation; L-phenylalanine degradation; acetoacetate and fumarate from L-phenylalanine: step 4/6. Its function is as follows. Involved in the catabolism of homogentisate (2,5-dihydroxyphenylacetate or 2,5-OH-PhAc), a central intermediate in the degradation of phenylalanine and tyrosine. Catalyzes the oxidative ring cleavage of the aromatic ring of homogentisate to yield maleylacetoacetate. In Rhizobium meliloti (strain 1021) (Ensifer meliloti), this protein is Homogentisate 1,2-dioxygenase.